The following is a 357-amino-acid chain: 3-isopropylmalate dehydrogenase (357 aa).

76-89 is an NAD(+) binding site; the sequence is GPKWDALDSNIRPE. Residues arginine 96, arginine 106, arginine 134, and aspartate 224 each coordinate substrate. Residues aspartate 224, aspartate 248, and aspartate 252 each coordinate Mg(2+). 282–294 lines the NAD(+) pocket; the sequence is GSAPDIAGQGVAN.

It belongs to the isocitrate and isopropylmalate dehydrogenases family. LeuB type 1 subfamily. In terms of assembly, homodimer. It depends on Mg(2+) as a cofactor. Mn(2+) is required as a cofactor.

It is found in the cytoplasm. It carries out the reaction (2R,3S)-3-isopropylmalate + NAD(+) = 4-methyl-2-oxopentanoate + CO2 + NADH. It functions in the pathway amino-acid biosynthesis; L-leucine biosynthesis; L-leucine from 3-methyl-2-oxobutanoate: step 3/4. Its function is as follows. Catalyzes the oxidation of 3-carboxy-2-hydroxy-4-methylpentanoate (3-isopropylmalate) to 3-carboxy-4-methyl-2-oxopentanoate. The product decarboxylates to 4-methyl-2 oxopentanoate. This is 3-isopropylmalate dehydrogenase from Saccharophagus degradans (strain 2-40 / ATCC 43961 / DSM 17024).